The following is a 381-amino-acid chain: MTQTTHHTPDTARQADPFPVKGMDAVVFAVGNAKQAAHYYSTAFGMKLVAYSGPENGSRETASYVLESGSARFVFTSVIKPSTDWGTFLAQHVAEHGDGVVDLAIEVPDARAAHAYAVEHGARSLAEPHEVKDEHGTVVLAAIATYGETRHTLVERTGYDGPYLPGYVAAKPMVAPPAQRVFQAVDHCVGNVELGRMNEWVGFYNKVMGFTNMKEFVGDDIATEYSALMSKVVADGTLKVKFPINEPAIAKKKSQIDEYLEFYGGAGVQHIALNTNDIVATVRAMRAAGVEFLDTPDSYYDTLGEWAGETRVPVDVLRELKILVDRDEDGYLLQIFTKPVQDRPTVFFEMIERHGSMGFGKGNFKALFEAIEREQEKRGNL.

2 VOC domains span residues G22–R156 and A184–K338. Fe cation contacts are provided by H187, H270, and E349.

This sequence belongs to the 4HPPD family. As to quaternary structure, homodimer. The cofactor is Fe cation.

The catalysed reaction is 3-(4-hydroxyphenyl)pyruvate + O2 = homogentisate + CO2. It participates in amino-acid degradation; L-phenylalanine degradation; acetoacetate and fumarate from L-phenylalanine: step 3/6. The protein is 4-hydroxyphenylpyruvate dioxygenase (hpd) of Streptomyces coelicolor (strain ATCC BAA-471 / A3(2) / M145).